The primary structure comprises 183 residues: uncharacterized protein (183 aa).

Positions 1 to 23 (MSAFKKSLLVAGVAMILSNNVFA) are cleaved as a signal peptide. Cysteines 41 and 80 form a disulfide.

It belongs to the fimbrial protein family.

Its subcellular location is the fimbrium. This is an uncharacterized protein from Escherichia coli (strain K12).